A 273-amino-acid polypeptide reads, in one-letter code: Pantothenate synthetase (273 aa).

27–34 serves as a coordination point for ATP; sequence MGALHAGH. Residue His34 is the Proton donor of the active site. Residue Gln58 participates in (R)-pantoate binding. Beta-alanine is bound at residue Gln58. An ATP-binding site is contributed by 144–147; sequence GKKD. A (R)-pantoate-binding site is contributed by Gln150. ATP-binding positions include Val173 and 181 to 184; that span reads LSSR.

Belongs to the pantothenate synthetase family. Homodimer.

It is found in the cytoplasm. It catalyses the reaction (R)-pantoate + beta-alanine + ATP = (R)-pantothenate + AMP + diphosphate + H(+). It participates in cofactor biosynthesis; (R)-pantothenate biosynthesis; (R)-pantothenate from (R)-pantoate and beta-alanine: step 1/1. Catalyzes the condensation of pantoate with beta-alanine in an ATP-dependent reaction via a pantoyl-adenylate intermediate. The polypeptide is Pantothenate synthetase (Campylobacter hominis (strain ATCC BAA-381 / DSM 21671 / CCUG 45161 / LMG 19568 / NCTC 13146 / CH001A)).